Here is a 547-residue protein sequence, read N- to C-terminus: Methionine--tRNA ligase (547 aa).

The 'HIGH' region motif lies at 15 to 25; it reads PYANGSLHLGH. Cys-146, Cys-149, Cys-159, and Cys-162 together coordinate Zn(2+). A 'KMSKS' region motif is present at residues 332-336; it reads KMSKS. Lys-335 is a binding site for ATP.

This sequence belongs to the class-I aminoacyl-tRNA synthetase family. MetG type 1 subfamily. As to quaternary structure, monomer. Zn(2+) serves as cofactor.

It localises to the cytoplasm. The enzyme catalyses tRNA(Met) + L-methionine + ATP = L-methionyl-tRNA(Met) + AMP + diphosphate. Is required not only for elongation of protein synthesis but also for the initiation of all mRNA translation through initiator tRNA(fMet) aminoacylation. In Baumannia cicadellinicola subsp. Homalodisca coagulata, this protein is Methionine--tRNA ligase.